Consider the following 439-residue polypeptide: Sequestosome-1 (439 aa).

Ala-2 bears the N-acetylalanine mark. An interaction with LCK region spans residues 2–48 (ASLTVKAYLLGKEEAAREIRRFSFCFSPEPEAEAAAGPGPCERLLSR). The region spanning 3–100 (SLTVKAYLLG…DIFRIYIKEK (98 aa)) is the PB1 domain. Residue Ser-24 is modified to Phosphoserine. The tract at residues 41-105 (PCERLLSRVA…YIKEKKECRR (65 aa)) is interaction with PRKCZ and dimerization. Positions 48-78 (RVAVLFPALRPGGFQAHYRDEDGDLVAFSSD) are interaction with PAWR. An interaction with GABRR3 region spans residues 119–221 (VHPNVICDGC…DGRPCPTAES (103 aa)). The ZZ-type zinc-finger motif lies at 120 to 170 (HPNVICDGCNGPVVGTRYKCSVCPDYDLCSVCEGKGLHREHSKLIFPNPFG). 4 residues coordinate Zn(2+): Cys-125, Cys-128, Cys-139, and Cys-142. The residue at position 145 (Tyr-145) is a Phosphotyrosine. The Zn(2+) site is built by Cys-148, Cys-151, His-157, and His-160. Residues 167–217 (NPFGHLSDSFSHSRWLRKLKHGHFGWPGWEMGPPGNWSPRPPRAGDGRPCP) are LIM protein-binding. Phosphoserine occurs at positions 173, 175, and 204. Residues 201 to 231 (GNWSPRPPRAGDGRPCPTAESASAPSEDPNV) are disordered. The TRAF6-binding motif lies at 225–230 (PSEDPN). Phosphoserine is present on residues Ser-246 and Ser-263. Positions 259-389 (GGKRSRLTPT…ALYPHLPPEA (131 aa)) are disordered. Polar residues predominate over residues 265–292 (LTPTSAESSSTGTEDKSGTQPSSCSSEV). Phosphothreonine is present on Thr-266. Residues 266-439 (TPTSAESSST…IQYSKHPPPL (174 aa)) form an interaction with NTRK1 region. 2 positions are modified to phosphoserine: Ser-269 and Ser-281. Cys-288 carries S-palmitoyl cysteine lipidation. 3 positions are modified to phosphoserine: Ser-305, Ser-327, and Ser-331. The MAP1LC3B-binding stretch occupies residues 320 to 341 (QPEELMESDNCSGGDDDWTHLS). The LIR signature appears at 335-340 (DDWTHL). Basic and acidic residues predominate over residues 336 to 346 (DWTHLSSKEVD). The interval 346–351 (DPSTGE) is interaction with KEAP1. Phosphoserine occurs at positions 348, 354, 360, 364, and 365. The span at 350-372 (GELQSLQMPESEGPSSLDPSQEG) shows a compositional bias: polar residues. The UBA domain occupies 388 to 433 (EADPRLIESLSQMLSMGFSDEGGWLTRLLQTKNYDIGAALDTIQYS). Ser-402 is subject to Phosphoserine; by ULK1 and TBK1. The residue at position 406 (Ser-406) is a Phosphoserine. Residues Lys-419 and Lys-434 each carry the N6-acetyllysine; alternate modification. A Glycyl lysine isopeptide (Lys-Gly) (interchain with G-Cter in ubiquitin); alternate cross-link involves residue Lys-419. Lys-434 participates in a covalent cross-link: Glycyl lysine isopeptide (Lys-Gly) (interchain with G-Cter in SUMO2); alternate.

As to quaternary structure, homooligomer or heterooligomer; may form homotypic arrays. Dimerization interferes with ubiquitin binding. Component of a ternary complex with PAWR and PRKCZ. Forms a complex with JUB/Ajuba, PRKCZ and TRAF6. Identified in a complex with TRAF6 and CYLD. Identified in a heterotrimeric complex with ubiquitin and ZFAND5, where ZFAND5 and SQSTM1 both interact with the same ubiquitin molecule. Interacts (via LIR motif) with MAP1LC3A and MAP1LC3B, as well as with other ATG8 family members, including GABARAP, GABARAPL1 and GABARAPL2; these interactions are necessary for the recruitment MAP1 LC3 family members to inclusion bodies containing polyubiquitinated protein aggregates and for their degradation by autophagy. Interacts directly with PRKCI and PRKCZ. Interacts with EBI3, LCK, RASA1, NR2F2, NTRK1, NTRK2, NTRK3, NBR1, MAP2K5 and MAPKAPK5. Upon TNF-alpha stimulation, interacts with RIPK1 probably bridging IKBKB to the TNF-R1 complex composed of TNF-R1/TNFRSF1A, TRADD and RIPK1. Interacts with the proteasome subunits PSMD4 and PSMC2. Interacts with TRAF6. Interacts with 'Lys-63'-linked polyubiquitinated MAPT/TAU. Interacts with FHOD3. Interacts with CYLD. Interacts with SESN1. Interacts with SESN2. Interacts with ULK1. Interacts with UBD. Interacts with WDR81; the interaction is direct and regulates the interaction of SQSTM1 with ubiquitinated proteins. Interacts with WDFY3; this interaction is required to recruit WDFY3 to cytoplasmic bodies and to PML bodies. Interacts with LRRC25. Interacts with STING1; leading to relocalization of STING1 to autophagosomes. Interacts (when phosphorylated at Ser-348) with KEAP1; the interaction is direct and inactivates the BCR(KEAP1) complex by sequestering KEAP1 in inclusion bodies, promoting its degradation. Interacts with MOAP1; promoting dissociation of SQSTM1 inclusion bodies that sequester KEAP1. Interacts with GBP1. Interacts with TAX1BP1. Interacts with (ubiquitinated) PEX5; specifically binds PEX5 ubiquitinated at 'Lys-209' in response to reactive oxygen species (ROS). Interacts (via PB1 domain) with TNS2; the interaction leads to sequestration of TNS2 in cytoplasmic aggregates with SQSTM1 and promotes TNS2 ubiquitination and proteasomal degradation. Interacts with IRS1; the interaction is disrupted by the presence of tensin TNS2. Interacts with TRIM5. Interacts with TRIM11 (when ubiquitinated); promoting AIM2 recruitment to autophagosomes and autophagy-dependent degradation of AIM2. Interacts with TRIM13. Interacts with TRIM16. Interacts with TRIM23. Interacts with TRIM50. Interacts with TRIM55. Interacts with ECSIT; this interaction inhibits TLR4 signaling via functional regulation of the TRAF6-ECSIT complex. Interacts with GABRR1, GABRR2 and GABRR3. Interacts with WDR83. Interacts with GRB2. Interacts with USP12; the interaction is independent of USP12 deubiquitinase activity and may be involved in regulation of autophagic flux. Interacts with ASB6. Phosphorylated. Phosphorylation at Ser-406 by ULK1 destabilizes the UBA dimer interface and increases binding affinity to ubiquitinated proteins. Phosphorylation at Ser-406 also primes for subsequent phosphorylation at Ser-402. Phosphorylation at Ser-402 by CK2 or ULK1 promotes binding to ubiquitinated proteins by increasing the affinity between the UBA domain and polyubiquitin chains. Phosphorylation at Ser-402 by ULK1 is stimulated by SESN2. Phosphorylated at Ser-402 by TBK1, leading to promote relocalization of 'Lys-63'-linked ubiquitinated STING1 to autophagosomes. Phosphorylation at Ser-348 by ULK1 promotes interaction with KEAP1 and inactivation of the BCR(KEAP1) complex, promoting NFE2L2/NRF2 nuclear accumulation and expression of phase II detoxifying enzymes. Phosphorylated in vitro by TTN. Post-translationally, ubiquitinated by UBE2J1 and RNF26 at Lys-434: ubiquitinated SQSTM1 attracts specific vesicle-associated adapters, forming a molecular bridge that restrains cognate vesicles in the perinuclear region and organizes the endosomal pathway for efficient cargo transport. Ubiquitination by UBE2D2 and UBE2D3 increases its ability to bind polyubiquitin chains by destabilizing the UBA dimer interface. Deubiquitination by USP15 releases target vesicles for fast transport into the cell periphery. Ubiquitinated by the BCR(KEAP1) complex at Lys-419, increasing SQSTM1 sequestering activity and promoting its degradation. Ubiquitinated via 'Lys-29' and 'Lys-33'-linked polyubiquitination leading to xenophagic targeting of bacteria and inhibition of their replication. In terms of processing, acetylated at Lys-419 and Lys-434 by KAT5/TIP60, promotes activity by destabilizing the UBA dimer interface and increases binding affinity to ubiquitinated proteins. Deacetylated by HDAC6. Palmitoylation at Cys-288 by ZDHHC19 is required for efficient autophagic degradation of SQSTM1-cargo complexes by promoting affinity for ATG8 proteins and recruitment of p62 bodies to autophagosomes. Dealmitoylated at Cys-288 by LYPLA1. In terms of tissue distribution, ubiquitously expressed. In brain, mainly expressed by neurons, especially pyramidal neurons in the cerebral cortex and hippocampus. Also expressed by Purkinje cells and neurons in the dentate nucleus of the cerebellum and neurons of the basal ganglia (at protein level).

The protein localises to the cytoplasmic vesicle. Its subcellular location is the autophagosome. It is found in the preautophagosomal structure. The protein resides in the cytoplasm. It localises to the cytosol. The protein localises to the nucleus. Its subcellular location is the PML body. It is found in the late endosome. The protein resides in the lysosome. It localises to the endoplasmic reticulum. The protein localises to the myofibril. Its subcellular location is the sarcomere. Functionally, molecular adapter required for selective macroautophagy (aggrephagy) by acting as a bridge between polyubiquitinated proteins and autophagosomes. Promotes the recruitment of ubiquitinated cargo proteins to autophagosomes via multiple domains that bridge proteins and organelles in different steps. SQSTM1 first mediates the assembly and removal of ubiquitinated proteins by undergoing liquid-liquid phase separation upon binding to ubiquitinated proteins via its UBA domain, leading to the formation of insoluble cytoplasmic inclusions, known as p62 bodies. SQSTM1 then interacts with ATG8 family proteins on autophagosomes via its LIR motif, leading to p62 body recruitment to autophagosomes, followed by autophagic clearance of ubiquitinated proteins. SQSTM1 is itself degraded along with its ubiquitinated cargos. Also required to recruit ubiquitinated proteins to PML bodies in the nucleus. Also involved in autophagy of peroxisomes (pexophagy) in response to reactive oxygen species (ROS) by acting as a bridge between ubiquitinated PEX5 receptor and autophagosomes. Acts as an activator of the NFE2L2/NRF2 pathway via interaction with KEAP1: interaction inactivates the BCR(KEAP1) complex by sequestering the complex in inclusion bodies, promoting nuclear accumulation of NFE2L2/NRF2 and subsequent expression of cytoprotective genes. Promotes relocalization of 'Lys-63'-linked ubiquitinated STING1 to autophagosomes. Involved in endosome organization by retaining vesicles in the perinuclear cloud: following ubiquitination by RNF26, attracts specific vesicle-associated adapters, forming a molecular bridge that restrains cognate vesicles in the perinuclear region and organizes the endosomal pathway for efficient cargo transport. Sequesters tensin TNS2 into cytoplasmic puncta, promoting TNS2 ubiquitination and proteasomal degradation. May regulate the activation of NFKB1 by TNF-alpha, nerve growth factor (NGF) and interleukin-1. May play a role in titin/TTN downstream signaling in muscle cells. Adapter that mediates the interaction between TRAF6 and CYLD. In terms of biological role, more potent than isoform 2 to stimulate PRKCZ-dependent phosphorylation of KCNAB2. In Rattus norvegicus (Rat), this protein is Sequestosome-1 (Sqstm1).